Consider the following 163-residue polypeptide: Putative 4-hydroxy-4-methyl-2-oxoglutarate aldolase (163 aa).

Substrate contacts are provided by residues 76–79 (GDMI) and R98. D99 is an a divalent metal cation binding site.

This sequence belongs to the class II aldolase/RraA-like family. Homotrimer. Requires a divalent metal cation as cofactor.

The enzyme catalyses 4-hydroxy-4-methyl-2-oxoglutarate = 2 pyruvate. The catalysed reaction is oxaloacetate + H(+) = pyruvate + CO2. In terms of biological role, catalyzes the aldol cleavage of 4-hydroxy-4-methyl-2-oxoglutarate (HMG) into 2 molecules of pyruvate. Also contains a secondary oxaloacetate (OAA) decarboxylase activity due to the common pyruvate enolate transition state formed following C-C bond cleavage in the retro-aldol and decarboxylation reactions. The chain is Putative 4-hydroxy-4-methyl-2-oxoglutarate aldolase from Pseudomonas fluorescens (strain Pf0-1).